The sequence spans 286 residues: 33 kDa chaperonin (286 aa).

2 cysteine pairs are disulfide-bonded: Cys-236–Cys-238 and Cys-264–Cys-267.

It belongs to the HSP33 family. Under oxidizing conditions two disulfide bonds are formed involving the reactive cysteines. Under reducing conditions zinc is bound to the reactive cysteines and the protein is inactive.

It localises to the cytoplasm. Functionally, redox regulated molecular chaperone. Protects both thermally unfolding and oxidatively damaged proteins from irreversible aggregation. Plays an important role in the bacterial defense system toward oxidative stress. This is 33 kDa chaperonin from Carboxydothermus hydrogenoformans (strain ATCC BAA-161 / DSM 6008 / Z-2901).